The chain runs to 303 residues: MLPFCFEMTSMSYIGRFAPSPSGPLHFGSLIAALGSYFQAKSQHGQWLVRIEDLDPPREMPGAADLILKTLETYHLFWDGEVVYQSQRHHLYQAQIDHWLQSGQAYYCQCSRKQIKEMGGYYNGHCQELHLDAGAIRLKMTQPITHFDDLRHGQMHIPLELAQEDFIIKRRDGLFAYNLAVVLDDIDQGVTEVVRGADLIEPTGRQISLYRMLGQVPVRYLHLPLAMDKNGNKLSKQNHATGIDLTHPASMILEAMAFLGFAIPKELHQANLDEILHWGVQNWRLNQLPESLEITARFSNGTA.

L-glutamate-binding positions include 16–20 and glutamate 52; that span reads RFAPS. The short motif at 19-29 is the 'HIGH' region element; sequence PSPSGPLHFGS. The Zn(2+) site is built by cysteine 108, cysteine 110, tyrosine 122, and cysteine 126. L-glutamate is bound by residues tyrosine 177 and arginine 195. Positions 233 to 237 match the 'KMSKS' region motif; the sequence is KLSKQ. ATP is bound at residue lysine 236.

The protein belongs to the class-I aminoacyl-tRNA synthetase family. GluQ subfamily. The cofactor is Zn(2+).

Its function is as follows. Catalyzes the tRNA-independent activation of glutamate in presence of ATP and the subsequent transfer of glutamate onto a tRNA(Asp). Glutamate is transferred on the 2-amino-5-(4,5-dihydroxy-2-cyclopenten-1-yl) moiety of the queuosine in the wobble position of the QUC anticodon. The chain is Glutamyl-Q tRNA(Asp) synthetase from Vibrio vulnificus (strain CMCP6).